Reading from the N-terminus, the 388-residue chain is Succinate--CoA ligase [ADP-forming] subunit beta (388 aa).

One can recognise an ATP-grasp domain in the interval 9 to 244 (KQIFAQYGLP…PSQEDAREAA (236 aa)). ATP is bound by residues Lys46, 53–55 (GRG), Glu99, Ala102, and Glu107. Mg(2+) contacts are provided by Asn199 and Asp213. Substrate is bound by residues Asn264 and 321-323 (GIV).

Belongs to the succinate/malate CoA ligase beta subunit family. In terms of assembly, heterotetramer of two alpha and two beta subunits. Mg(2+) serves as cofactor.

The catalysed reaction is succinate + ATP + CoA = succinyl-CoA + ADP + phosphate. The enzyme catalyses GTP + succinate + CoA = succinyl-CoA + GDP + phosphate. The protein operates within carbohydrate metabolism; tricarboxylic acid cycle; succinate from succinyl-CoA (ligase route): step 1/1. In terms of biological role, succinyl-CoA synthetase functions in the citric acid cycle (TCA), coupling the hydrolysis of succinyl-CoA to the synthesis of either ATP or GTP and thus represents the only step of substrate-level phosphorylation in the TCA. The beta subunit provides nucleotide specificity of the enzyme and binds the substrate succinate, while the binding sites for coenzyme A and phosphate are found in the alpha subunit. This chain is Succinate--CoA ligase [ADP-forming] subunit beta, found in Mannheimia succiniciproducens (strain KCTC 0769BP / MBEL55E).